A 405-amino-acid chain; its full sequence is Syndecan-3 (405 aa).

The N-terminal stretch at methionine 1–alanine 22 is a signal peptide. Residues glutamine 23–glutamate 347 are Extracellular-facing. Residues glutamate 31–serine 59 form a disordered region. A compositionally biased stretch (acidic residues) spans glycine 38–aspartate 52. Serine 39, serine 55, serine 57, serine 59, and serine 66 each carry an O-linked (Xyl...) (glycosaminoglycan) serine glycan. 2 disordered regions span residues threonine 134–threonine 159 and threonine 191–asparagine 301. The span at threonine 191–threonine 201 shows a compositional bias: low complexity. A compositionally biased stretch (polar residues) spans serine 202–alanine 237. O-linked (Xyl...) (glycosaminoglycan) serine glycans are attached at residues serine 280, serine 283, and serine 330. The helical transmembrane segment at valine 348–tyrosine 372 threads the bilayer. Residues arginine 373–alanine 405 lie on the Cytoplasmic side of the membrane.

Belongs to the syndecan proteoglycan family. In terms of processing, O-glycosylated within the Thr/Ser-rich region which could interact with lectin domains on other molecules. Proximal chondrogenic central core of embryonic limb buds where cartilage differentiation is being initiated.

The protein localises to the membrane. In terms of biological role, cell surface proteoglycan that may bear both heparan sulfate and chondroitin sulfate. The multiple functional domains provide potential sites for mediating the adhesive cell-matrix interactions and cytoskeletal reorganization involved in limb chondrogenesis. Interaction with other matrix ligands as well as phosphorylation and shedding of the ectodomain might be involved in cell shape changes that occur during chondrogenesis. Furthermore, shedding of the ectodomain might break the adhesive interactions that promoted condensation, thus facilitating the deposition of cartilage matrix molecules. In Gallus gallus (Chicken), this protein is Syndecan-3 (SDC3).